The primary structure comprises 238 residues: Uridylate kinase (238 aa).

12 to 15 serves as a coordination point for ATP; it reads KLSG. Gly-54 is a binding site for UMP. 2 residues coordinate ATP: Gly-55 and Arg-59. UMP-binding positions include Asp-74 and 135–142; that span reads TGNPYFTT. ATP-binding residues include Thr-162, Asn-163, Tyr-168, and Asp-171.

This sequence belongs to the UMP kinase family. As to quaternary structure, homohexamer.

The protein localises to the cytoplasm. The enzyme catalyses UMP + ATP = UDP + ADP. It functions in the pathway pyrimidine metabolism; CTP biosynthesis via de novo pathway; UDP from UMP (UMPK route): step 1/1. Inhibited by UTP. Catalyzes the reversible phosphorylation of UMP to UDP. In Nitrobacter hamburgensis (strain DSM 10229 / NCIMB 13809 / X14), this protein is Uridylate kinase.